A 309-amino-acid polypeptide reads, in one-letter code: Calcium homeostasis modulator protein 5 (309 aa).

The Cytoplasmic segment spans residues 1-15 (MDAFQGILKFFLNQK). Residues lysine 15, arginine 32, and valine 37 each coordinate a 1,2-diacyl-sn-glycero-3-phosphate. Residues 16–37 (TVIGYSFMALLTVGSERLFSVV) form a helical membrane-spanning segment. Topologically, residues 38–45 (AFKCPCST) are extracellular. Cystine bridges form between cysteine 41–cysteine 127, cysteine 43–cysteine 158, and cysteine 142–cysteine 149. The helical transmembrane segment at 46–70 (ENMTYGLVFLFAPAWVLLILGFFLN) threads the bilayer. Topologically, residues 71–99 (NRSWRLFTGCCVNPRKIFPRGHSCRFFYV) are cytoplasmic. Residues 100-129 (LGQITLSSLVAPVMWLSVALLNGTFYECAM) form a helical membrane-spanning segment. The a 1,2-diacyl-sn-glycero-3-phosphate site is built by glutamine 102 and asparagine 121. Residues 130 to 174 (SGTRSSGLLELICKGKPKECWEELHKVSCGKTSMLPTVNEELKLS) lie on the Extracellular side of the membrane. A helical transmembrane segment spans residues 175 to 200 (LQAQSQILGWCLICSASFFSLLTTCY). Residues 201 to 309 (ARCRSKVSYL…MVLVGTAHNM (109 aa)) are Cytoplasmic-facing. A 1,2-diacyl-sn-glycero-3-phosphate is bound at residue arginine 202.

It belongs to the CALHM family. As to quaternary structure, oligomerizes to form undecameric cone-shaped channels.

Its subcellular location is the membrane. In terms of biological role, may assemble to form large pore channels with gating and ion conductance likely regulated by membrane lipids. This Homo sapiens (Human) protein is Calcium homeostasis modulator protein 5.